We begin with the raw amino-acid sequence, 182 residues long: Ribosome maturation factor RimM (182 aa).

A PRC barrel domain is found at 101-182 (VDEYYWSDLK…RIYVNWGVDY (82 aa)).

It belongs to the RimM family. Binds ribosomal protein uS19.

The protein resides in the cytoplasm. An accessory protein needed during the final step in the assembly of 30S ribosomal subunit, possibly for assembly of the head region. Essential for efficient processing of 16S rRNA. May be needed both before and after RbfA during the maturation of 16S rRNA. It has affinity for free ribosomal 30S subunits but not for 70S ribosomes. The sequence is that of Ribosome maturation factor RimM from Acinetobacter baylyi (strain ATCC 33305 / BD413 / ADP1).